The following is a 258-amino-acid chain: UPF0246 protein PM0066 (258 aa).

The protein belongs to the UPF0246 family.

The chain is UPF0246 protein PM0066 from Pasteurella multocida (strain Pm70).